We begin with the raw amino-acid sequence, 160 residues long: Major strawberry allergen Fra a 1-E (160 aa).

It belongs to the BetVI family. Monomer. Interacts with AP. In terms of tissue distribution, highly expressed in roots. Expressed in open flowers. Expressed at low levels in leaves, flower buds and fruits.

Functionally, involved in the control of flavonoid biosynthesis in fruits, probably by binding directly to natural flavonoids. Binds the natural flavonoid quercetin-3-O-glucuronide with affinities in the low micromolar range. In Fragaria ananassa (Strawberry), this protein is Major strawberry allergen Fra a 1-E.